The chain runs to 274 residues: MAYKVNLHITQKCNYACKYCFAHFDHHNDLTLGQWKHIIDNLKTSGLVDAINFAGGEPVLHRDFAAIVNYAYDQGFKLSIITNGSLMLNPKLMPPELFAKFDTLGISVDSINPKTLIALGACNNSQEVLSYDKLSHLITLARSVNPTIRIKLNTVITNLNADEDLTIIGQELDIARWKMLRMKLFIHEGFNNAPLLVSQADFDGFVERHAEVSHDIVPENDLTRSYIMVDNQGRLLDDETEEYKVVGSLLAEDFGTVFDRYHFDEATYASRYAG.

Positions 1-215 (MAYKVNLHIT…VERHAEVSHD (215 aa)) constitute a Radical SAM core domain. Residues cysteine 13, cysteine 17, and cysteine 20 each contribute to the [4Fe-4S] cluster site.

This sequence belongs to the radical SAM superfamily. Prokaryotic viperin family. [4Fe-4S] cluster is required as a cofactor.

It catalyses the reaction CTP + AH2 + S-adenosyl-L-methionine = 3'-deoxy-3',4'-didehydro-CTP + 5'-deoxyadenosine + L-methionine + A + H2O + H(+). Functionally, expression of pVip6 in E.coli (strain MG1655) confers resistance to phages lambda, P1, SECphi6, SECphi8 and T7. Catalyzes the conversion of cytidine triphosphate (CTP) to 3'-deoxy-3',4'-didehydro-CTP (ddhCTP), probably via a SAM-dependent radical mechanism. The modified nucleotide represses transcription from T7 RNA polymerase-directed genes (possibly by acting as chain terminators), strongly suggesting these nucleotides block viral polymerase transcription. The protein is S-adenosylmethionine-dependent nucleotide dehydratase of Selenomonas ruminantium.